A 302-amino-acid chain; its full sequence is Methylsterol monooxygenase erg25A (302 aa).

The N-linked (GlcNAc...) asparagine glycan is linked to asparagine 5. 3 helical membrane-spanning segments follow: residues 47–67, 105–125, and 132–152; these read NIVA…IYFS, YILL…HPMM, and FTIP…FFLL. One can recognise a Fatty acid hydroxylase domain in the interval 147 to 283; that stretch reads IIFFLLEDTY…FRHWDVLMGT (137 aa). The Histidine box-1 signature appears at 161-165; the sequence is HRAMH. Residues 174–178 carry the Histidine box-2 motif; the sequence is HRIHH. A helical transmembrane segment spans residues 193 to 213; that stretch reads PWETLLLGLGTIGPPLLLALM. Positions 258 to 264 match the Histidine box-3 motif; sequence WHDDHHR. Asparagine 269 is a glycosylation site (N-linked (GlcNAc...) asparagine).

It belongs to the sterol desaturase family. Fe cation is required as a cofactor.

The protein localises to the endoplasmic reticulum membrane. The protein operates within steroid metabolism; ergosterol biosynthesis. In terms of biological role, sterol-C4-methyl oxidase; part of the third module of ergosterol biosynthesis pathway that includes the late steps of the pathway. Erg25A is a catalytic component of the C-4 demethylation complex that catalyzes the conversion of 4,4-dimethylfecosterol into fecosterol via 4-methylfecosterol. The third module or late pathway involves the ergosterol synthesis itself through consecutive reactions that mainly occur in the endoplasmic reticulum (ER) membrane. Firstly, the squalene synthase erg9 catalyzes the condensation of 2 farnesyl pyrophosphate moieties to form squalene, which is the precursor of all steroids. Squalene synthase is crucial for balancing the incorporation of farnesyl diphosphate (FPP) into sterol and nonsterol isoprene synthesis. Secondly, squalene is converted into lanosterol by the consecutive action of the squalene epoxidase erg1 and the lanosterol synthase erg7. Then, the delta(24)-sterol C-methyltransferase erg6 methylates lanosterol at C-24 to produce eburicol. Eburicol is the substrate of the sterol 14-alpha demethylase encoded by cyp51A and cyp51B, to yield 4,4,24-trimethyl ergosta-8,14,24(28)-trienol. The C-14 reductase erg24 then reduces the C14=C15 double bond which leads to 4,4-dimethylfecosterol. A sequence of further demethylations at C-4, involving the C-4 demethylation complex containing the C-4 methylsterol oxidases erg25A or erg25B, the sterol-4-alpha-carboxylate 3-dehydrogenase erg26 and the 3-keto-steroid reductase erg27, leads to the production of fecosterol via 4-methylfecosterol. The C-8 sterol isomerase erg2 then catalyzes the reaction which results in unsaturation at C-7 in the B ring of sterols and thus converts fecosterol to episterol. The sterol-C5-desaturase erg3B then catalyzes the introduction of a C-5 double bond in the B ring to produce 5-dehydroepisterol. The 2 other sterol-C5-desaturases, erg3A and erg3C, seem to be less important in ergosterol biosynthesis. The C-22 sterol desaturase erg5 further converts 5-dehydroepisterol into ergosta-5,7,22,24(28)-tetraen-3beta-ol by forming the C-22(23) double bond in the sterol side chain. Finally, ergosta-5,7,22,24(28)-tetraen-3beta-ol is substrate of the C-24(28) sterol reductases erg4A and erg4B to produce ergosterol. Possible alternative sterol biosynthetic pathways might exist from fecosterol to ergosterol, depending on the activities of the erg3 isoforms. In Aspergillus fumigatus (strain ATCC MYA-4609 / CBS 101355 / FGSC A1100 / Af293) (Neosartorya fumigata), this protein is Methylsterol monooxygenase erg25A.